A 376-amino-acid chain; its full sequence is Lipoyl synthase, mitochondrial (376 aa).

Residues C103, C108, C114, C134, C138, C141, and S349 each coordinate [4Fe-4S] cluster. Residues 119–338 (EHGTQTATIM…EDRGNQLGFL (220 aa)) enclose the Radical SAM core domain.

It belongs to the radical SAM superfamily. Lipoyl synthase family. [4Fe-4S] cluster serves as cofactor.

It localises to the mitochondrion. The enzyme catalyses [[Fe-S] cluster scaffold protein carrying a second [4Fe-4S](2+) cluster] + N(6)-octanoyl-L-lysyl-[protein] + 2 oxidized [2Fe-2S]-[ferredoxin] + 2 S-adenosyl-L-methionine + 4 H(+) = [[Fe-S] cluster scaffold protein] + N(6)-[(R)-dihydrolipoyl]-L-lysyl-[protein] + 4 Fe(3+) + 2 hydrogen sulfide + 2 5'-deoxyadenosine + 2 L-methionine + 2 reduced [2Fe-2S]-[ferredoxin]. It participates in protein modification; protein lipoylation via endogenous pathway; protein N(6)-(lipoyl)lysine from octanoyl-[acyl-carrier-protein]: step 2/2. Functionally, catalyzes the radical-mediated insertion of two sulfur atoms into the C-6 and C-8 positions of the octanoyl moiety bound to the lipoyl domains of lipoate-dependent enzymes, thereby converting the octanoylated domains into lipoylated derivatives. In Drosophila ananassae (Fruit fly), this protein is Lipoyl synthase, mitochondrial.